The following is a 309-amino-acid chain: tRNA dimethylallyltransferase (309 aa).

11 to 18 is a binding site for ATP; sequence GPTATGKS. 13 to 18 contacts substrate; the sequence is TATGKS.

It belongs to the IPP transferase family. As to quaternary structure, monomer. Mg(2+) serves as cofactor.

It catalyses the reaction adenosine(37) in tRNA + dimethylallyl diphosphate = N(6)-dimethylallyladenosine(37) in tRNA + diphosphate. Functionally, catalyzes the transfer of a dimethylallyl group onto the adenine at position 37 in tRNAs that read codons beginning with uridine, leading to the formation of N6-(dimethylallyl)adenosine (i(6)A). The chain is tRNA dimethylallyltransferase from Rhodococcus jostii (strain RHA1).